The primary structure comprises 106 residues: Nucleoid-associated protein XOO1065 (106 aa).

Basic and acidic residues predominate over residues 80–89 (KIDAESKDRM). Positions 80 to 106 (KIDAESKDRMGSATAGMQLPPGMKLPF) are disordered.

This sequence belongs to the YbaB/EbfC family. As to quaternary structure, homodimer.

The protein localises to the cytoplasm. The protein resides in the nucleoid. Functionally, binds to DNA and alters its conformation. May be involved in regulation of gene expression, nucleoid organization and DNA protection. The polypeptide is Nucleoid-associated protein XOO1065 (Xanthomonas oryzae pv. oryzae (strain KACC10331 / KXO85)).